Consider the following 460-residue polypeptide: Cysteine--tRNA ligase (460 aa).

Residue cysteine 28 participates in Zn(2+) binding. The short motif at 30-40 is the 'HIGH' region element; sequence MTVYDYCHLGH. Positions 209, 234, and 238 each coordinate Zn(2+). The 'KMSKS' region motif lies at 266–270; that stretch reads KMSKS. Residue lysine 269 participates in ATP binding.

It belongs to the class-I aminoacyl-tRNA synthetase family. Monomer. Zn(2+) is required as a cofactor.

It localises to the cytoplasm. It carries out the reaction tRNA(Cys) + L-cysteine + ATP = L-cysteinyl-tRNA(Cys) + AMP + diphosphate. The chain is Cysteine--tRNA ligase from Pseudomonas fluorescens (strain ATCC BAA-477 / NRRL B-23932 / Pf-5).